Consider the following 233-residue polypeptide: MLEKCPIIALDFSDLASVTTFLEHFPKEELLFVKIGMELYYSEGPSIIRYIKSLGHRIFLDLKLHDIPNTVRSSMSVLAKLGIDMTNVHAAGGVEMMKAAREGLGKGPILLAVTQLTSTSQEQMQVDQHINLSVVDSVCHYAQKAQEAGLDGVVASAQEGMQIKKQTNEHFICLTPGIRPPQTNQLDDQKRTMTPEQARIVGADYIVVGRPITKAENPYQAYLEIKEEWNRIK.

Residues Asp-11, Lys-34, 61–70 (DLKLHDIPNT), Thr-117, Arg-179, Gln-189, Gly-209, and Arg-210 each bind substrate. Catalysis depends on Lys-63, which acts as the Proton donor.

It belongs to the OMP decarboxylase family. Type 1 subfamily. As to quaternary structure, homodimer.

It catalyses the reaction orotidine 5'-phosphate + H(+) = UMP + CO2. The protein operates within pyrimidine metabolism; UMP biosynthesis via de novo pathway; UMP from orotate: step 2/2. Catalyzes the decarboxylation of orotidine 5'-monophosphate (OMP) to uridine 5'-monophosphate (UMP). The polypeptide is Orotidine 5'-phosphate decarboxylase (Streptococcus agalactiae serotype V (strain ATCC BAA-611 / 2603 V/R)).